A 513-amino-acid chain; its full sequence is ATP synthase subunit alpha 1 (513 aa).

169-176 lines the ATP pocket; that stretch reads GDRQTGKT.

The protein belongs to the ATPase alpha/beta chains family. As to quaternary structure, F-type ATPases have 2 components, CF(1) - the catalytic core - and CF(0) - the membrane proton channel. CF(1) has five subunits: alpha(3), beta(3), gamma(1), delta(1), epsilon(1). CF(0) has three main subunits: a(1), b(2) and c(9-12). The alpha and beta chains form an alternating ring which encloses part of the gamma chain. CF(1) is attached to CF(0) by a central stalk formed by the gamma and epsilon chains, while a peripheral stalk is formed by the delta and b chains.

Its subcellular location is the cell inner membrane. The enzyme catalyses ATP + H2O + 4 H(+)(in) = ADP + phosphate + 5 H(+)(out). Produces ATP from ADP in the presence of a proton gradient across the membrane. The alpha chain is a regulatory subunit. The polypeptide is ATP synthase subunit alpha 1 (Nitrosospira multiformis (strain ATCC 25196 / NCIMB 11849 / C 71)).